The sequence spans 104 residues: Large ribosomal subunit protein uL24 (104 aa).

Belongs to the universal ribosomal protein uL24 family. As to quaternary structure, part of the 50S ribosomal subunit.

Functionally, one of two assembly initiator proteins, it binds directly to the 5'-end of the 23S rRNA, where it nucleates assembly of the 50S subunit. One of the proteins that surrounds the polypeptide exit tunnel on the outside of the subunit. The polypeptide is Large ribosomal subunit protein uL24 (Escherichia coli O81 (strain ED1a)).